The following is a 1512-amino-acid chain: DNA (cytosine-5)-methyltransferase 2 (1512 aa).

A compositionally biased stretch (basic and acidic residues) spans 1 to 22; that stretch reads METKVGKQKKRSVDSNDDVSKE. 2 disordered regions span residues 1–35 and 634–678; these read METK…RNFK and AIHE…GNSE. Acidic residues predominate over residues 638-662; sequence VEEEEIEEDEEEDENEEDDIEEEAV. BAH domains follow at residues 707 to 841 and 909 to 1026; these read ETVA…FSLP and TTLK…KQFP. One can recognise an SAM-dependent MTase C5-type domain in the interval 1071-1505; sequence LATLDIFAGC…RKLKEALYLK (435 aa). Cys1176 is a catalytic residue.

It belongs to the class I-like SAM-binding methyltransferase superfamily. C5-methyltransferase family. In terms of tissue distribution, expressed at low levels in vegetative and floral organs.

It localises to the nucleus. It catalyses the reaction a 2'-deoxycytidine in DNA + S-adenosyl-L-methionine = a 5-methyl-2'-deoxycytidine in DNA + S-adenosyl-L-homocysteine + H(+). Its function is as follows. Maintains chromatin CpG methylation that plays a role in genomic imprinting, regulation of embryogenesis and seed viability. Required for proper patterns of CG DNA methylation in dividing cells. The polypeptide is DNA (cytosine-5)-methyltransferase 2 (MET2) (Arabidopsis thaliana (Mouse-ear cress)).